Consider the following 292-residue polypeptide: ATP synthase gamma chain (292 aa).

Belongs to the ATPase gamma chain family. F-type ATPases have 2 components, CF(1) - the catalytic core - and CF(0) - the membrane proton channel. CF(1) has five subunits: alpha(3), beta(3), gamma(1), delta(1), epsilon(1). CF(0) has three main subunits: a, b and c.

It is found in the cell membrane. Functionally, produces ATP from ADP in the presence of a proton gradient across the membrane. The gamma chain is believed to be important in regulating ATPase activity and the flow of protons through the CF(0) complex. The polypeptide is ATP synthase gamma chain (Streptococcus pneumoniae serotype 2 (strain D39 / NCTC 7466)).